The chain runs to 204 residues: Inactive ribonuclease-like protein 9 (204 aa).

Positions methionine 1–phenylalanine 26 are cleaved as a signal peptide. 3 disulfide bridges follow: cysteine 97–cysteine 152, cysteine 115–cysteine 167, and cysteine 122–cysteine 129. Asparagine 130 and asparagine 142 each carry an N-linked (GlcNAc...) asparagine glycan.

It belongs to the pancreatic ribonuclease family.

Its subcellular location is the secreted. Functionally, does not exhibit any ribonuclease activity. The polypeptide is Inactive ribonuclease-like protein 9 (RNASE9) (Symphalangus syndactylus (Siamang)).